A 249-amino-acid polypeptide reads, in one-letter code: MADS-box transcription factor 7 (249 aa).

The 61-residue stretch at 1-61 (MGRGRVELKR…GKLYEFCSTQ (61 aa)) folds into the MADS-box domain. The region spanning 90 to 180 (LKASRNEYLK…RRKLEESNHV (91 aa)) is the K-box domain.

In terms of assembly, may interact with the K-box of MADS6. May interact with MADS13 and MADS18. As to expression, expressed in lodicules, stamens and carpels.

The protein localises to the nucleus. Functionally, probable transcription factor. May be involved in the control of flowering time. The protein is MADS-box transcription factor 7 (MADS7) of Oryza sativa subsp. japonica (Rice).